Reading from the N-terminus, the 956-residue chain is Thrombospondin-3 (956 aa).

The N-terminal stretch at 1–22 (METQELRGALALLLLCFFTSAS) is a signal peptide. One can recognise a Laminin G-like domain in the interval 23 to 193 (QDLQVIDLLT…VESMKIILGG (171 aa)). Disulfide bonds link cysteine 278-cysteine 289, cysteine 283-cysteine 300, cysteine 303-cysteine 314, cysteine 320-cysteine 332, cysteine 326-cysteine 341, cysteine 344-cysteine 368, cysteine 374-cysteine 388, cysteine 382-cysteine 397, cysteine 400-cysteine 412, cysteine 418-cysteine 432, cysteine 426-cysteine 442, cysteine 444-cysteine 455, cysteine 471-cysteine 478, cysteine 483-cysteine 503, cysteine 519-cysteine 539, cysteine 542-cysteine 562, cysteine 578-cysteine 598, cysteine 601-cysteine 621, cysteine 639-cysteine 659, cysteine 679-cysteine 699, and cysteine 715-cysteine 936. An N-linked (GlcNAc...) asparagine glycan is attached at asparagine 310. One can recognise an EGF-like 1; calcium-binding domain in the interval 316 to 354 (DINECAHADPCFPGSSCINTMPGFHCEACPRGYKGTQVS). The region spanning 370-410 (DIDECNDGNNGGCDPNSICTNTVGSFKCGPCRLGFLGNQSQ) is the EGF-like 2; calcium-binding domain. Asparagine 407 is a glycosylation site (N-linked (GlcNAc...) asparagine). The EGF-like 3 domain maps to 414 to 456 (PARTCHSPAHSPCHIHAHCLFERNGAVSCQCNVGWAGNGNVCG). 8 TSP type-3 repeats span residues 457–491 (TDTDIDGYPDQALPCMDNNKHCKQDNCLLTPNSGQ), 492–527 (EDADNDGVGDQCDDDADGDGIKNVEDNCRLFPNKDQ), 528–550 (QNSDTDSFGDACDNCPNVPNNDQ), 551–586 (KDTDGNGEGDACDNDVDGDGIPNGLDNCPKVPNPLQ), 587–609 (TDRDEDGVGDACDSCPEMSNPTQ), 610–647 (TDADSDLVGDVCDTNEDSDGDGHQDTKDNCPQLPNSSQ), 648–687 (LDSDNDGLGDECDGDDDNDGIPDYVPPGPDNCRLVPNPNQ), and 688–723 (KDSDGNGVGDVCEDDFDNDAVVDPLDVCPESAEVTL). 2 disordered regions span residues 518 to 537 (NCRLFPNKDQQNSDTDSFGD) and 546 to 702 (PNND…CEDD). Over residues 555 to 568 (GNGEGDACDNDVDG) the composition is skewed to acidic residues. Over residues 612–628 (ADSDLVGDVCDTNEDSD) the composition is skewed to acidic residues. The N-linked (GlcNAc...) asparagine glycan is linked to asparagine 644. Over residues 650-667 (SDNDGLGDECDGDDDNDG) the composition is skewed to acidic residues. A TSP C-terminal domain is found at 727–941 (RAYQTVVLDP…LQYRCNDTVP (215 aa)). A glycan (N-linked (GlcNAc...) asparagine) is linked at asparagine 937.

It belongs to the thrombospondin family. In terms of assembly, oligomer; disulfide-linked.

Functionally, adhesive glycoprotein that mediates cell-to-cell and cell-to-matrix interactions. Can bind to fibrinogen, fibronectin, laminin and type V collagen. The sequence is that of Thrombospondin-3 (THBS3) from Homo sapiens (Human).